The following is a 284-amino-acid chain: MEMO1 family protein Saci_0089 (284 aa).

It belongs to the MEMO1 family.

The polypeptide is MEMO1 family protein Saci_0089 (Sulfolobus acidocaldarius (strain ATCC 33909 / DSM 639 / JCM 8929 / NBRC 15157 / NCIMB 11770)).